The following is a 142-amino-acid chain: Putative pre-16S rRNA nuclease (142 aa).

This sequence belongs to the YqgF nuclease family.

The protein resides in the cytoplasm. Could be a nuclease involved in processing of the 5'-end of pre-16S rRNA. The polypeptide is Putative pre-16S rRNA nuclease (Lactobacillus helveticus (strain DPC 4571)).